The primary structure comprises 404 residues: MQQVKKVVLAYSGGVDTSVCIPYLKKEYGVSEVVTFVADLGQGEDLELIRQKALNSGASQSIVGNLVNSFVERYAFPAIRANALYLDKYPLSTALARPLIAENLVNIAREISADAVAHGCTGKGNDQVRFDLAINALGPDLKIITPAREWNMSREEAIEYGEKFGIPAPVSKKSPYSIDVNLLGRSIEAGILEDPMKEAPEDIFAMTSSIENSPDSPQEVEIIFKNGFPVGINDESLTPVEIIKKANVLAGEHGFGRIDMIEDRVVGIKSREIYETPGLLLLIKAHKELESITLNPDVVDFKGIVEKKWGQLVYQGFWFGPLKDSLDSFISSTQTAVNGRVKIRLHKGNAIVIGRMSENNSLYREDLATYSEEDVFNHSLAEGFIYMWGMSNKIWAELNSKTKD.

ATP contacts are provided by residues 10 to 18 (AYSGGVDTS) and Ala38. Position 89 (Tyr89) interacts with L-citrulline. Gly119 is an ATP binding site. L-aspartate contacts are provided by Thr121, Asn125, and Asp126. Asn125 lines the L-citrulline pocket. L-citrulline-binding residues include Arg129, Ser177, Ser186, Glu262, and Tyr274.

The protein belongs to the argininosuccinate synthase family. Type 1 subfamily. In terms of assembly, homotetramer.

Its subcellular location is the cytoplasm. The catalysed reaction is L-citrulline + L-aspartate + ATP = 2-(N(omega)-L-arginino)succinate + AMP + diphosphate + H(+). It functions in the pathway amino-acid biosynthesis; L-arginine biosynthesis; L-arginine from L-ornithine and carbamoyl phosphate: step 2/3. The sequence is that of Argininosuccinate synthase from Prochlorococcus marinus (strain MIT 9301).